The sequence spans 284 residues: Tryptophan 2,3-dioxygenase (284 aa).

Residues 53–57 (FIVQH), Tyr115, and Arg119 contribute to the substrate site. Position 242 (His242) interacts with heme. Thr256 lines the substrate pocket.

It belongs to the tryptophan 2,3-dioxygenase family. As to quaternary structure, homotetramer. Heme serves as cofactor.

It catalyses the reaction L-tryptophan + O2 = N-formyl-L-kynurenine. The protein operates within amino-acid degradation; L-tryptophan degradation via kynurenine pathway; L-kynurenine from L-tryptophan: step 1/2. Functionally, heme-dependent dioxygenase that catalyzes the oxidative cleavage of the L-tryptophan (L-Trp) pyrrole ring and converts L-tryptophan to N-formyl-L-kynurenine. Catalyzes the oxidative cleavage of the indole moiety. The protein is Tryptophan 2,3-dioxygenase of Bordetella pertussis (strain Tohama I / ATCC BAA-589 / NCTC 13251).